The sequence spans 106 residues: Replication restart protein PriB (106 aa).

One can recognise an SSB domain in the interval 4–103 (TNRLVLSGTV…LHAEQIEFID (100 aa)).

Belongs to the PriB family. Homodimer. Interacts with PriA and DnaT. Component of the replication restart primosome. Primosome assembly occurs via a 'hand-off' mechanism. PriA binds to replication forks, subsequently PriB then DnaT bind; DnaT then displaces ssDNA to generate the helicase loading substrate.

Involved in the restart of stalled replication forks, which reloads the replicative helicase on sites other than the origin of replication; the PriA-PriB pathway is the major replication restart pathway. During primosome assembly it facilitates complex formation between PriA and DnaT on DNA; stabilizes PriA on DNA. Stimulates the DNA unwinding activity of PriA helicase. The chain is Replication restart protein PriB from Yersinia enterocolitica serotype O:8 / biotype 1B (strain NCTC 13174 / 8081).